The primary structure comprises 581 residues: Rhodanese-like domain-containing protein 6 (581 aa).

A Rhodanese domain is found at 158–258; the sequence is ENKELVLLDA…YLEQFPSGGF (101 aa). Cysteine 216 acts as the Cysteine persulfide intermediate in catalysis.

This is Rhodanese-like domain-containing protein 6 (STR6) from Arabidopsis thaliana (Mouse-ear cress).